Consider the following 637-residue polypeptide: 1-deoxy-D-xylulose-5-phosphate synthase (637 aa).

Thiamine diphosphate is bound by residues His-75 and 116–118; that span reads AHS. Residue Asp-147 participates in Mg(2+) binding. Thiamine diphosphate is bound by residues 148–149, Asn-177, Tyr-288, and Glu-370; that span reads GA. Asn-177 serves as a coordination point for Mg(2+).

Belongs to the transketolase family. DXPS subfamily. Homodimer. The cofactor is Mg(2+). Thiamine diphosphate is required as a cofactor.

The enzyme catalyses D-glyceraldehyde 3-phosphate + pyruvate + H(+) = 1-deoxy-D-xylulose 5-phosphate + CO2. It functions in the pathway metabolic intermediate biosynthesis; 1-deoxy-D-xylulose 5-phosphate biosynthesis; 1-deoxy-D-xylulose 5-phosphate from D-glyceraldehyde 3-phosphate and pyruvate: step 1/1. Its function is as follows. Catalyzes the acyloin condensation reaction between C atoms 2 and 3 of pyruvate and glyceraldehyde 3-phosphate to yield 1-deoxy-D-xylulose-5-phosphate (DXP). The chain is 1-deoxy-D-xylulose-5-phosphate synthase from Cupriavidus metallidurans (strain ATCC 43123 / DSM 2839 / NBRC 102507 / CH34) (Ralstonia metallidurans).